Here is a 592-residue protein sequence, read N- to C-terminus: MMRTHYCGSLTEAQIDQTVTLCGWVHRRRDHGGVIFLDMRDRDGLVQVVIDPDTPEAFATADKVRSEFVLKITGRVRRRYEGTENSNMVSGQIEVLGKEIEVLAQSETPPFPLNDDNINISEEHRLKYRFLDIRRPEMLDRLRFRSKVTNLIRNYLDDHGFLDVETPILTRATPEGARDYLVPSRVQNGSFYALPQSPQLFKQLLMVGGIDRYYQIAKCFRDEDLRADRQPEFTQIDIETSFLNDDDIMDLMEGMTVKLFDELLGIKFDKFQRMPYSEAMRDYASDKPDLRIPLKLVDVADLMQDVEFKVFAGPAKDPKGRIAALRVPGAGALPRSAIDEYTKFVGIYGAKGLAYIKVNEIEKGVEGLQSPIVKFIEPIVMQLLERVGAENGDIVFFGADKAKVVNDAMGALRVKIGHDLKLVTCEWAPLWVVDFPMFEETDDGKWTSVHHPFTLPKSSVEDVKANPGEALSVAYDMVLNGTEVGGGSLRIYTLEMQKAIFEALGISDEEAEEKFSFLLNALRYGAPPHGGLAFGLDRLIMLMTGASSIRDVIAFPKTKTAECPLTQAPAPVEANQLRDLGIRLREQPKKED.

Glu175 is an L-aspartate binding site. Residues 199-202 (QLFK) form an aspartate region. Residue Arg221 participates in L-aspartate binding. ATP-binding positions include 221 to 223 (RDE) and Gln230. His450 contacts L-aspartate. Glu483 contacts ATP. Arg490 contributes to the L-aspartate binding site. Position 535 to 538 (535 to 538 (GLDR)) interacts with ATP.

This sequence belongs to the class-II aminoacyl-tRNA synthetase family. Type 1 subfamily. Homodimer.

It is found in the cytoplasm. It catalyses the reaction tRNA(Asx) + L-aspartate + ATP = L-aspartyl-tRNA(Asx) + AMP + diphosphate. In terms of biological role, aspartyl-tRNA synthetase with relaxed tRNA specificity since it is able to aspartylate not only its cognate tRNA(Asp) but also tRNA(Asn). Reaction proceeds in two steps: L-aspartate is first activated by ATP to form Asp-AMP and then transferred to the acceptor end of tRNA(Asp/Asn). This chain is Aspartate--tRNA(Asp/Asn) ligase, found in Acinetobacter baylyi (strain ATCC 33305 / BD413 / ADP1).